The sequence spans 591 residues: Metalloendopeptidase OPG085 (591 aa).

H41 serves as a coordination point for Zn(2+). E44 is an active-site residue. Zn(2+)-binding residues include H45 and E112.

Belongs to the peptidase M44 family. Zn(2+) is required as a cofactor. In terms of processing, undergoes proteolytic processing during the course of infection. May be cleaved into 46 kDa and 22 kDa products (Potential).

It localises to the virion. Functionally, probably involved in maturation of some viral proteins by processing them preferentially at Ala-Gly-|-Ser/Thr/Lys motifs. Does not seem to be responsible for the cleavage of major core proteins. This is Metalloendopeptidase OPG085 (OPG085) from Monkeypox virus.